The primary structure comprises 424 residues: UPF0229 protein Avin_46880 (424 aa).

Residues 57–108 form a disordered region; sequence RDIDEPVLHHGRGGKQTIVHPGNKEFTAGERIPRPSGGGGGGSGSGKASNSG. The segment covering 92-101 has biased composition (gly residues); sequence SGGGGGGSGS.

This sequence belongs to the UPF0229 family.

This Azotobacter vinelandii (strain DJ / ATCC BAA-1303) protein is UPF0229 protein Avin_46880.